We begin with the raw amino-acid sequence, 537 residues long: Bifunctional purine biosynthesis protein PurH (537 aa).

Residues 11 to 158 (ADIQRVRRAL…KNHAYVGVIV (148 aa)) enclose the MGS-like domain.

Belongs to the PurH family.

It carries out the reaction (6R)-10-formyltetrahydrofolate + 5-amino-1-(5-phospho-beta-D-ribosyl)imidazole-4-carboxamide = 5-formamido-1-(5-phospho-D-ribosyl)imidazole-4-carboxamide + (6S)-5,6,7,8-tetrahydrofolate. The enzyme catalyses IMP + H2O = 5-formamido-1-(5-phospho-D-ribosyl)imidazole-4-carboxamide. The protein operates within purine metabolism; IMP biosynthesis via de novo pathway; 5-formamido-1-(5-phospho-D-ribosyl)imidazole-4-carboxamide from 5-amino-1-(5-phospho-D-ribosyl)imidazole-4-carboxamide (10-formyl THF route): step 1/1. Its pathway is purine metabolism; IMP biosynthesis via de novo pathway; IMP from 5-formamido-1-(5-phospho-D-ribosyl)imidazole-4-carboxamide: step 1/1. This is Bifunctional purine biosynthesis protein PurH from Parvibaculum lavamentivorans (strain DS-1 / DSM 13023 / NCIMB 13966).